A 364-amino-acid polypeptide reads, in one-letter code: Trans-enoyl reductase sthE (364 aa).

An NADP(+)-binding site is contributed by 51–54 (TDYK). A substrate-binding site is contributed by 137–144 (WGTAALAI). Residues 172-175 (ATAT), 195-198 (SESS), Tyr213, and 261-262 (LE) each bind NADP(+). Position 281–285 (281–285 (GFEGQ)) interacts with substrate. Residue 351–352 (VK) participates in NADP(+) binding.

Belongs to the zinc-containing alcohol dehydrogenase family. In terms of assembly, monomer.

The catalysed reaction is 7 malonyl-CoA + acetyl-CoA + 10 AH2 + 5 S-adenosyl-L-methionine + 2 H(+) = dehydroprobetaenone I + 10 A + 5 S-adenosyl-L-homocysteine + 7 CO2 + 8 CoA + 6 H2O. The protein operates within mycotoxin biosynthesis. In terms of biological role, trans-enoyl reductase; part of the gene cluster that mediates the biosynthesis of the phytotoxin stemphyloxin II. The first step of the pathway is the synthesis of dehydroprobetaenone I by the polyketide synthase sthA and the enoyl reductase sthE via condensation of one acetyl-CoA starter unit with 7 malonyl-CoA units and 5 methylations. The C-terminal reductase (R) domain of sthA catalyzes the reductive release of the polyketide chain. Because sthA lacks a designated enoylreductase (ER) domain, the required activity is provided the enoyl reductase sthE. The short-chain dehydrogenase/reductase sthC then catalyzes reduction of dehydroprobetaenone I to probetaenone I. The cytochrome P450 monooxygenase sthF catalyzes successive epoxidation, oxidation (resulting from epoxide opening) and hydroxylation to install a tertiary alcohol in the decaline ring to yield betaenone C from dehydroprobetaenone I and betaenone B from probetaenone I. The FAD-linked oxidoreductase sthB is responsible for the conversion of betaenone C to betaenone A via an intramolecular aldol reaction between C-1 and C-17 to form the bridged tricyclic system in betaenone A. Finally, the cytochrome P450 monooxygenase sthD catalyzes the hydroxylation of C-15 to afford the final metabolite stemphyloxin II. This is Trans-enoyl reductase sthE from Phaeosphaeria nodorum (strain SN15 / ATCC MYA-4574 / FGSC 10173) (Glume blotch fungus).